The chain runs to 447 residues: Rab GDP dissociation inhibitor alpha (447 aa).

This sequence belongs to the Rab GDI family. As to quaternary structure, interacts with RHOH. Interacts with the non-phosphorylated forms of RAB1A, RAB3A, RAB5A, RAB5B, RAB5C, RAB8A, RAB8B, RAB10, RAB12, RAB35, and RAB43.

Its subcellular location is the cytoplasm. It is found in the golgi apparatus. The protein resides in the trans-Golgi network. Its function is as follows. Regulates the GDP/GTP exchange reaction of most Rab proteins by inhibiting the dissociation of GDP from them, and the subsequent binding of GTP to them. Promotes the dissociation of GDP-bound Rab proteins from the membrane and inhibits their activation. Promotes the dissociation of RAB1A, RAB3A, RAB5A and RAB10 from membranes. This Macaca fascicularis (Crab-eating macaque) protein is Rab GDP dissociation inhibitor alpha (GDI1).